Here is a 406-residue protein sequence, read N- to C-terminus: Aminomethyltransferase, mitochondrial (406 aa).

The transit peptide at 1-29 (MRGGLWQLGQSITRRLAQADKKTIGRRCF) directs the protein to the mitochondrion. Substrate contacts are provided by Glu234, Arg265, and Tyr403.

It belongs to the GcvT family. As to quaternary structure, the glycine cleavage system is composed of four proteins: P, T, L and H.

It is found in the mitochondrion. The catalysed reaction is N(6)-[(R)-S(8)-aminomethyldihydrolipoyl]-L-lysyl-[protein] + (6S)-5,6,7,8-tetrahydrofolate = N(6)-[(R)-dihydrolipoyl]-L-lysyl-[protein] + (6R)-5,10-methylene-5,6,7,8-tetrahydrofolate + NH4(+). Its function is as follows. The glycine cleavage system catalyzes the degradation of glycine. This Solanum tuberosum (Potato) protein is Aminomethyltransferase, mitochondrial (GDCST).